The sequence spans 287 residues: Shikimate dehydrogenase (NADP(+)) (287 aa).

Residues 20–22 (SRS) and Thr67 contribute to the shikimate site. The active-site Proton acceptor is Lys71. Glu84 is a binding site for NADP(+). Asn93 and Asp108 together coordinate shikimate. NADP(+)-binding positions include 132–136 (GAGGA), 156–161 (NRTAAR), and Met226. Shikimate is bound at residue Tyr228. NADP(+) is bound at residue Gly250.

It belongs to the shikimate dehydrogenase family. As to quaternary structure, homodimer.

It carries out the reaction shikimate + NADP(+) = 3-dehydroshikimate + NADPH + H(+). Its pathway is metabolic intermediate biosynthesis; chorismate biosynthesis; chorismate from D-erythrose 4-phosphate and phosphoenolpyruvate: step 4/7. Its function is as follows. Involved in the biosynthesis of the chorismate, which leads to the biosynthesis of aromatic amino acids. Catalyzes the reversible NADPH linked reduction of 3-dehydroshikimate (DHSA) to yield shikimate (SA). The sequence is that of Shikimate dehydrogenase (NADP(+)) from Bordetella parapertussis (strain 12822 / ATCC BAA-587 / NCTC 13253).